The chain runs to 140 residues: Nucleoside diphosphate kinase (140 aa).

The ATP site is built by Lys-11, Phe-59, Arg-87, Thr-93, Arg-104, and Asn-114. His-117 (pros-phosphohistidine intermediate) is an active-site residue.

The protein belongs to the NDK family. Homotetramer. Mg(2+) serves as cofactor.

It is found in the cytoplasm. The enzyme catalyses a 2'-deoxyribonucleoside 5'-diphosphate + ATP = a 2'-deoxyribonucleoside 5'-triphosphate + ADP. It carries out the reaction a ribonucleoside 5'-diphosphate + ATP = a ribonucleoside 5'-triphosphate + ADP. Major role in the synthesis of nucleoside triphosphates other than ATP. The ATP gamma phosphate is transferred to the NDP beta phosphate via a ping-pong mechanism, using a phosphorylated active-site intermediate. The chain is Nucleoside diphosphate kinase from Rhodovulum sulfidophilum (Rhodobacter sulfidophilus).